We begin with the raw amino-acid sequence, 156 residues long: MIHFLLCFNRQSKVRLSKFYSTYTPTEKNRATREVMNQVLSRSPKFCNFVQWREFTIVYQRFASLFFVMVTDSTDNELVTLESIQRFVVVLDIVFGNICELDLIYEFQRAYQVLDEFLLTGHLQESSSKEILRAINDAEGMEKSLLVAEVLDQHFL.

It belongs to the adaptor complexes small subunit family. As to quaternary structure, adaptor protein complex 1 (AP-1) is a heterotetramer composed of two large adaptins (gamma-type subunit and beta-type subunit), a medium adaptin (mu-type subunit) and a small adaptin (sigma-type subunit).

The protein resides in the golgi apparatus. It localises to the trans-Golgi network. Its subcellular location is the cytoplasmic vesicle. The protein localises to the clathrin-coated vesicle membrane. In terms of biological role, subunit of clathrin-associated adaptor protein complex 1 that plays a role in protein sorting in the trans-Golgi network (TGN) and endosomes. The AP complexes mediate the recruitment of clathrin to membranes and the recognition of sorting signals within the cytosolic tails of transmembrane cargo molecules. Also involved in early steps of phagocytosis and macropinocytosis. The polypeptide is AP-1 complex subunit sigma-1 (ap1s1) (Dictyostelium discoideum (Social amoeba)).